A 511-amino-acid polypeptide reads, in one-letter code: MTMEINNTDPFEKMPLPDDSGLSGSGAFDDSKLAKLNGVISQGLNPYPYKFEKDEDICEILEKFEDFEKNEGLTVRTAGRLYNIRKHGKMIFADLGDQAGRVQVLVRKGNLPDEEFEIFKNLVDSGDIIGVQGDLFRTKRGENSISVSEFSLLSKSLCALPEKFHGLKDVETRYRKRYLDLIVNAEKREIFVMRSKLISEIRRFLTDREFLEFETPILQTVYGGANARPFTTFHNCLGQNLFLRIAPELYLKRLVVGGYEKVFEICKNFRNEDIDTTHNPEFTMIEVYEAYRDYNDMMDLTESLVSELVFKLTGSYEVQMGEKTINLRSPWKRISMEDALKEYAGLDIFAHSIEDLKKIAIENRIEDYEKAKSHGEFLALLFEGLVEDKLIDPTFIYDFPVENSPLAKNHREKAGFVERFELFLNGWELANGYSELNDPLEQEKRFEEQDKKRKLGDLEAQTVDYDFINALGYGLPPTGGMGLGIDRLTMILSGLESIKEVILFPQMKRED.

Residues 1-22 form a disordered region; it reads MTMEINNTDPFEKMPLPDDSGL. The Mg(2+) site is built by E421 and E428.

This sequence belongs to the class-II aminoacyl-tRNA synthetase family. In terms of assembly, homodimer. The cofactor is Mg(2+).

The protein localises to the cytoplasm. It carries out the reaction tRNA(Lys) + L-lysine + ATP = L-lysyl-tRNA(Lys) + AMP + diphosphate. This chain is Lysine--tRNA ligase 2, found in Methanosarcina mazei (strain ATCC BAA-159 / DSM 3647 / Goe1 / Go1 / JCM 11833 / OCM 88) (Methanosarcina frisia).